Here is a 360-residue protein sequence, read N- to C-terminus: Inward rectifier potassium channel 13 (360 aa).

At 1–50 (MDGSHCKVIAPLLTERHQRMVTKDGHSTLQMDGAQTGLAYLRDAWGILMD) the chain is on the cytoplasmic side. A helical transmembrane segment spans residues 51-77 (MRWRWMMLVFSASFVIHWLVFAVLWYI). At 78 to 105 (LAEMNGDLGLDHDAPPENHTICVKYITS) the chain is on the extracellular side. Residues 106-122 (FTAAFSFSLETQLTIGY) constitute an intramembrane region (helical; Pore-forming). Positions 119–124 (TIGYGT) match the Selectivity filter motif. The Extracellular portion of the chain corresponds to 123–131 (GTMFPSGDC). A helical membrane pass occupies residues 132–157 (PSAIALLAIQMLLGLMLEAFITGAFV). Topologically, residues 158-360 (AKIARPKNRA…FQISETGLTE (203 aa)) are cytoplasmic. S287 is modified (phosphoserine).

This sequence belongs to the inward rectifier-type potassium channel (TC 1.A.2.1) family. Homotetramer. Interacts with RAB28; the interaction may facilitate cone outer segments phagocytosis. Post-translationally, phosphorylation at Ser-287 by PKA increases them.

Its subcellular location is the membrane. The protein resides in the cell membrane. The catalysed reaction is K(+)(in) = K(+)(out). With respect to regulation, inhibited by Ba(2+) and Cs(+), although sensitivity to those inhibitors is much lower than in other Kir channels. Its function is as follows. Inward rectifier potassium channels are characterized by a greater tendency to allow potassium to flow into the cell rather than out of it. Their voltage dependence is regulated by the concentration of extracellular potassium; as external potassium is raised, the voltage range of the channel opening shifts to more positive voltages. The inward rectification is mainly due to the blockage of outward current by internal magnesium. KCNJ13 has a very low single channel conductance, low sensitivity to block by external barium and cesium, and no dependence of its inward rectification properties on the internal blocking particle magnesium. This chain is Inward rectifier potassium channel 13 (KCNJ13), found in Bos taurus (Bovine).